We begin with the raw amino-acid sequence, 204 residues long: Dihydroorotase (204 aa).

His-34 is a Zn(2+) binding site. A substrate-binding site is contributed by Leu-79. Residue Asp-107 coordinates Zn(2+). Asp-107 is a catalytic residue. The substrate site is built by His-111 and Ala-123.

The protein belongs to the metallo-dependent hydrolases superfamily. DHOase family. Class II DHOase subfamily. In terms of assembly, homodimer. Zn(2+) serves as cofactor.

The catalysed reaction is (S)-dihydroorotate + H2O = N-carbamoyl-L-aspartate + H(+). It functions in the pathway pyrimidine metabolism; UMP biosynthesis via de novo pathway; (S)-dihydroorotate from bicarbonate: step 3/3. Its function is as follows. Catalyzes the reversible cyclization of carbamoyl aspartate to dihydroorotate. The protein is Dihydroorotase of Serratia marcescens.